A 566-amino-acid polypeptide reads, in one-letter code: Proline--tRNA ligase (566 aa).

The protein belongs to the class-II aminoacyl-tRNA synthetase family. ProS type 1 subfamily. Homodimer.

It is found in the cytoplasm. The catalysed reaction is tRNA(Pro) + L-proline + ATP = L-prolyl-tRNA(Pro) + AMP + diphosphate. Functionally, catalyzes the attachment of proline to tRNA(Pro) in a two-step reaction: proline is first activated by ATP to form Pro-AMP and then transferred to the acceptor end of tRNA(Pro). As ProRS can inadvertently accommodate and process non-cognate amino acids such as alanine and cysteine, to avoid such errors it has two additional distinct editing activities against alanine. One activity is designated as 'pretransfer' editing and involves the tRNA(Pro)-independent hydrolysis of activated Ala-AMP. The other activity is designated 'posttransfer' editing and involves deacylation of mischarged Ala-tRNA(Pro). The misacylated Cys-tRNA(Pro) is not edited by ProRS. The chain is Proline--tRNA ligase from Staphylococcus saprophyticus subsp. saprophyticus (strain ATCC 15305 / DSM 20229 / NCIMB 8711 / NCTC 7292 / S-41).